A 95-amino-acid chain; its full sequence is Large ribosomal subunit protein uL24c (95 aa).

The protein belongs to the universal ribosomal protein uL24 family. As to quaternary structure, part of the 50S ribosomal subunit.

It localises to the plastid. It is found in the chloroplast. Its function is as follows. One of two assembly initiator proteins, it binds directly to the 5'-end of the 23S rRNA, where it nucleates assembly of the 50S subunit. The protein is Large ribosomal subunit protein uL24c (rpl24) of Porphyra purpurea (Red seaweed).